The chain runs to 494 residues: Catalase A (494 aa).

Positions 1–23 (MTDRPTITTTAGAPVPDNQNSLT) are enriched in polar residues. The interval 1–25 (MTDRPTITTTAGAPVPDNQNSLTAG) is disordered. Active-site residues include His55 and Asn127. Residue Tyr337 coordinates heme.

This sequence belongs to the catalase family. Requires heme as cofactor.

It is found in the periplasm. It carries out the reaction 2 H2O2 = O2 + 2 H2O. Decomposes hydrogen peroxide into water and oxygen; serves to protect cells from the toxic effects of hydrogen peroxide. This Rhizobium meliloti (strain 1021) (Ensifer meliloti) protein is Catalase A (katA).